Reading from the N-terminus, the 619-residue chain is Frizzled and smoothened-like protein L (619 aa).

The first 24 residues, 1–24 (MITNKSKYYFFLILIFINFYLINC), serve as a signal peptide directing secretion. N-linked (GlcNAc...) asparagine glycans are attached at residues asparagine 4, asparagine 63, asparagine 112, asparagine 143, asparagine 159, asparagine 184, and asparagine 203. At 25 to 245 (QEEYPIDQTG…KQWDRLYDLS (221 aa)) the chain is on the extracellular side. One can recognise an FZ domain in the interval 31–169 (DQTGKCEPYI…YSIYDLSLVN (139 aa)). Disulfide bonds link cysteine 36/cysteine 106 and cysteine 48/cysteine 99. Residues 246–266 (NSLSVLSCVGTLFLLFTFNIL) form a helical membrane-spanning segment. At 267 to 278 (NKKINRFDRMNS) the chain is on the cytoplasmic side. Residues 279-299 (LFNGSVFMMSLSGVIILFAGG) form a helical membrane-spanning segment. Residues 300–321 (PRALIKDGGARISVWQDPLCSA) are Extracellular-facing. A helical transmembrane segment spans residues 322 to 342 (TGFIFQLFSIAAILFWVVMSF). Residues 343–358 (ELWYKIKFMTKKLDLK) lie on the Cytoplasmic side of the membrane. The chain crosses the membrane as a helical span at residues 359–379 (KYYIPFIIIVSLVFSIIPLAT). The Extracellular segment spans residues 380-402 (KNYRMIRGNMHCWVHTTKLQNSL). A helical membrane pass occupies residues 403–423 (FWIPLGIAITIGTIFIGLVMF). Residues 424-444 (EIHRIVSANSKGGVLKLEIKS) lie on the Cytoplasmic side of the membrane. The helical transmembrane segment at 445–465 (ILNVALIYLTFIYLFAFNFYM) threads the bilayer. Residues 466–497 (NGQEGVVYGQIESFYQCTLENDASECTIQGPS) are Extracellular-facing. Residues 498–518 (IGSLGFFIFCIRIYGVYCFIL) form a helical membrane-spanning segment. Over 519–619 (QGLNYRAYNI…TLKDIEVSKS (101 aa)) the chain is Cytoplasmic. The disordered stretch occupies residues 581 to 605 (LNIDSAFSKNNESDDEDDYDPYKKS).

This sequence belongs to the G-protein coupled receptor Fz/Smo family.

The protein resides in the membrane. In Dictyostelium discoideum (Social amoeba), this protein is Frizzled and smoothened-like protein L (fslL).